Reading from the N-terminus, the 219-residue chain is UPF0173 metal-dependent hydrolase Mhun_1705 (219 aa).

This sequence belongs to the UPF0173 family.

The chain is UPF0173 metal-dependent hydrolase Mhun_1705 from Methanospirillum hungatei JF-1 (strain ATCC 27890 / DSM 864 / NBRC 100397 / JF-1).